A 98-amino-acid chain; its full sequence is DNA-binding protein Fis (98 aa).

Positions 74 to 93 (QTRAATMMGINRGTLRKKLK) form a DNA-binding region, H-T-H motif.

Belongs to the transcriptional regulatory Fis family. In terms of assembly, homodimer.

Its function is as follows. Activates ribosomal RNA transcription. Plays a direct role in upstream activation of rRNA promoters. The polypeptide is DNA-binding protein Fis (Vibrio parahaemolyticus serotype O3:K6 (strain RIMD 2210633)).